Reading from the N-terminus, the 123-residue chain is Small ribosomal subunit protein uS12cz/uS12cy (123 aa).

Belongs to the universal ribosomal protein uS12 family. As to quaternary structure, part of the 30S ribosomal subunit.

It localises to the plastid. The protein localises to the chloroplast. With S4 and S5 plays an important role in translational accuracy. Located at the interface of the 30S and 50S subunits. This is Small ribosomal subunit protein uS12cz/uS12cy (rps12-A) from Gossypium barbadense (Sea Island cotton).